The sequence spans 233 residues: 2,3-bisphosphoglycerate-dependent phosphoglycerate mutase (233 aa).

Substrate is bound by residues 8 to 15 (RHGESEWN), 21 to 22 (TG), Arg-60, 87 to 90 (ERHY), Lys-98, 114 to 115 (RR), and 183 to 184 (GN). His-9 (tele-phosphohistidine intermediate) is an active-site residue. Glu-87 acts as the Proton donor/acceptor in catalysis.

This sequence belongs to the phosphoglycerate mutase family. BPG-dependent PGAM subfamily.

The catalysed reaction is (2R)-2-phosphoglycerate = (2R)-3-phosphoglycerate. It participates in carbohydrate degradation; glycolysis; pyruvate from D-glyceraldehyde 3-phosphate: step 3/5. Functionally, catalyzes the interconversion of 2-phosphoglycerate and 3-phosphoglycerate. In Lactococcus lactis subsp. cremoris (strain MG1363), this protein is 2,3-bisphosphoglycerate-dependent phosphoglycerate mutase.